Reading from the N-terminus, the 117-residue chain is Modulator protein MzrA (117 aa).

Residues 1-11 (MMTNRRFRKPS) lie on the Cytoplasmic side of the membrane. Residues 12–29 (AWRLLLLLLPLVVLLSMS) form a helical membrane-spanning segment. Residues 30-117 (SRRLPDEVML…SNGTSPVTRS (88 aa)) are Periplasmic-facing.

It belongs to the MzrA family. In terms of assembly, interacts with EnvZ.

The protein localises to the cell inner membrane. Its function is as follows. Modulates the activity of the EnvZ/OmpR two-component regulatory system, probably by directly modulating EnvZ enzymatic activity and increasing stability of phosphorylated OmpR. The sequence is that of Modulator protein MzrA from Dickeya dadantii (strain 3937) (Erwinia chrysanthemi (strain 3937)).